A 214-amino-acid chain; its full sequence is Large ribosomal subunit protein uL3 (214 aa).

The tract at residues 119–159 (GVKRHGFAGGPKTHGQSDRHRAPGSIGPTTDPGRVHKGKRM) is disordered.

The protein belongs to the universal ribosomal protein uL3 family. In terms of assembly, part of the 50S ribosomal subunit. Forms a cluster with proteins L14 and L19.

One of the primary rRNA binding proteins, it binds directly near the 3'-end of the 23S rRNA, where it nucleates assembly of the 50S subunit. This chain is Large ribosomal subunit protein uL3, found in Thermomicrobium roseum (strain ATCC 27502 / DSM 5159 / P-2).